The primary structure comprises 695 residues: Threonine--tRNA ligase (695 aa).

In terms of domain architecture, TGS spans 1 to 66 (MSAPARPAPA…DTDVEVTPVA (66 aa)). The interval 263 to 569 (DHRKLGVELD…LTEHYAGAFP (307 aa)) is catalytic. Zn(2+)-binding residues include C368, H419, and H546.

It belongs to the class-II aminoacyl-tRNA synthetase family. Homodimer. Zn(2+) is required as a cofactor.

Its subcellular location is the cytoplasm. The catalysed reaction is tRNA(Thr) + L-threonine + ATP = L-threonyl-tRNA(Thr) + AMP + diphosphate + H(+). Functionally, catalyzes the attachment of threonine to tRNA(Thr) in a two-step reaction: L-threonine is first activated by ATP to form Thr-AMP and then transferred to the acceptor end of tRNA(Thr). Also edits incorrectly charged L-seryl-tRNA(Thr). The protein is Threonine--tRNA ligase of Mycolicibacterium gilvum (strain PYR-GCK) (Mycobacterium gilvum (strain PYR-GCK)).